The following is an 839-amino-acid chain: Autophagy-related protein 9A (839 aa).

The segment at Met-1 to Pro-20 is disordered. N-acetylalanine is present on Ala-2. Over Ala-2 to Cys-61 the chain is Cytoplasmic. A Tyrosine-based sorting signal motif is present at residues Tyr-8–Leu-11. Ser-14, Ser-16, and Ser-18 each carry phosphoserine. Residues Met-62–Val-84 form a helical membrane-spanning segment. The Lumenal portion of the chain corresponds to Ser-85–Glu-128. Residue Asn-99 is glycosylated (N-linked (GlcNAc...) asparagine). A helical transmembrane segment spans residues Asn-129–Ile-154. Over Cys-155–Ile-290 the chain is Cytoplasmic. Residues Leu-291 to Cys-301 lie within the membrane without spanning it. Residues Pro-302–Val-319 are Cytoplasmic-facing. The stretch at Leu-320–Gly-328 is an intramembrane region. Topologically, residues Ala-329–Pro-371 are cytoplasmic. Residues Leu-372 to Tyr-397 traverse the membrane as a helical segment. Residues Asp-398 to His-406 lie on the Lumenal side of the membrane. Residues Val-407–Phe-424 form a helical membrane-spanning segment. Residues Ile-425–Gln-470 lie on the Cytoplasmic side of the membrane. The stretch at Tyr-471 to Leu-480 is an intramembrane region. Residues Leu-481–Pro-483 are Cytoplasmic-facing. An intramembrane segment occupies Ile-484–Phe-492. Residues Cys-493–Val-839 are Cytoplasmic-facing. Phosphoserine is present on residues Ser-656, Ser-735, Ser-738, Ser-741, and Ser-828. 2 disordered regions span residues Ser-656 to Ser-686 and His-717 to Val-839. A compositionally biased stretch (basic and acidic residues) spans Glu-724–Asp-736. Acidic residues-rich tracts occupy residues Glu-737–Gly-747 and Val-823–Leu-832.

This sequence belongs to the ATG9 family. In terms of assembly, homotrimer; forms a homotrimer with a central pore that forms a path between the two membrane leaflets. Interacts (via cytoplasmic its C-terminus) with ATG2A. Interacts with SUPT20H. Interacts (via the tyrosine-based sorting signal motif) with AP4M1; promoting association with the AP-4 complex. Interacts with ARFIP1 and ARFIP2. Interacts with PI4K2A and PI4KB. Interacts with ATG4A; the interaction is direct and promotes ATG9A trafficking. Ufmylated in a DDRGK1 dependent manner.

It is found in the preautophagosomal structure membrane. It localises to the cytoplasmic vesicle. Its subcellular location is the autophagosome membrane. The protein localises to the golgi apparatus. The protein resides in the trans-Golgi network membrane. It is found in the late endosome membrane. It localises to the recycling endosome membrane. Its subcellular location is the endoplasmic reticulum membrane. The protein localises to the mitochondrion membrane. The enzyme catalyses a 1,2-diacyl-sn-glycero-3-phosphocholine(in) = a 1,2-diacyl-sn-glycero-3-phosphocholine(out). The catalysed reaction is a 1,2-diacyl-sn-glycero-3-phospho-L-serine(in) = a 1,2-diacyl-sn-glycero-3-phospho-L-serine(out). It carries out the reaction a 1,2-diacyl-sn-glycero-3-phosphoethanolamine(in) = a 1,2-diacyl-sn-glycero-3-phosphoethanolamine(out). Its function is as follows. Phospholipid scramblase involved in autophagy by mediating autophagosomal membrane expansion. Cycles between the preautophagosomal structure/phagophore assembly site (PAS) and the cytoplasmic vesicle pool and supplies membrane for the growing autophagosome. Lipid scramblase activity plays a key role in preautophagosomal structure/phagophore assembly by distributing the phospholipids that arrive through ATG2 (ATG2A or ATG2B) from the cytoplasmic to the luminal leaflet of the bilayer, thereby driving autophagosomal membrane expansion. Also required to supply phosphatidylinositol 4-phosphate to the autophagosome initiation site by recruiting the phosphatidylinositol 4-kinase beta (PI4KB) in a process dependent on ARFIP2, but not ARFIP1. In addition to autophagy, also plays a role in necrotic cell death. The polypeptide is Autophagy-related protein 9A (Homo sapiens (Human)).